A 418-amino-acid chain; its full sequence is cAMP-dependent protein kinase type II-beta regulatory subunit (418 aa).

The dimerization and phosphorylation stretch occupies residues 2-153 (SIEIPAGLTE…RLQEACKDIL (152 aa)). The segment covering 48-57 (TARFGHEGRT) has biased composition (basic and acidic residues). A disordered region spans residues 48 to 96 (TARFGHEGRTWGDLGAAAGGGTPSKGVNFAEEPMQSDSEDGEEEEAAPA). Thr69 bears the Phosphothreonine mark. Ser83, Ser85, and Ser114 each carry phosphoserine. The span at 84 to 94 (DSEDGEEEEAA) shows a compositional bias: acidic residues. Residues 154–275 (LFKN…ESLP), Glu223, Arg232, 276–418 (FLKS…EPTA), Glu352, and Arg361 contribute to the 3',5'-cyclic AMP site.

This sequence belongs to the cAMP-dependent kinase regulatory chain family. In terms of assembly, the inactive form of the enzyme is composed of two regulatory chains and two catalytic chains. Activation by cAMP produces two active catalytic monomers and a regulatory dimer that binds four cAMP molecules. Interacts with PRKACA and PRKACB. Interacts with the phosphorylated form of PJA2. Forms a complex composed of PRKAR2B, GSK3B and GSKIP through GSKIP interaction; facilitates PKA-induced phosphorylation and regulates GSK3B activity. Post-translationally, phosphorylated by the activated catalytic chain. As to expression, four types of regulatory chains are found: I-alpha, I-beta, II-alpha, and II-beta. Their expression varies among tissues and is in some cases constitutive and in others inducible.

The protein resides in the cytoplasm. The protein localises to the cell membrane. Regulatory subunit of the cAMP-dependent protein kinases involved in cAMP signaling in cells. Type II regulatory chains mediate membrane association by binding to anchoring proteins, including the MAP2 kinase. This is cAMP-dependent protein kinase type II-beta regulatory subunit (PRKAR2B) from Homo sapiens (Human).